The primary structure comprises 179 residues: Large ribosomal subunit protein uL5 (179 aa).

It belongs to the universal ribosomal protein uL5 family. As to quaternary structure, part of the 50S ribosomal subunit; part of the 5S rRNA/L5/L18/L25 subcomplex. Contacts the 5S rRNA and the P site tRNA. Forms a bridge to the 30S subunit in the 70S ribosome.

This is one of the proteins that bind and probably mediate the attachment of the 5S RNA into the large ribosomal subunit, where it forms part of the central protuberance. In the 70S ribosome it contacts protein S13 of the 30S subunit (bridge B1b), connecting the 2 subunits; this bridge is implicated in subunit movement. Contacts the P site tRNA; the 5S rRNA and some of its associated proteins might help stabilize positioning of ribosome-bound tRNAs. The chain is Large ribosomal subunit protein uL5 from Shewanella loihica (strain ATCC BAA-1088 / PV-4).